The sequence spans 369 residues: Chaperone protein DnaJ (369 aa).

Positions aspartate 5 to glycine 70 constitute a J domain. Residues glycine 128–glutamine 206 form a CR-type zinc finger. Positions 141, 144, 158, 161, 180, 183, 194, and 197 each coordinate Zn(2+). CXXCXGXG motif repeat units lie at residues cysteine 141–glycine 148, cysteine 158–glycine 165, cysteine 180–glycine 187, and cysteine 194–glycine 201.

It belongs to the DnaJ family. In terms of assembly, homodimer. Requires Zn(2+) as cofactor.

Its subcellular location is the cytoplasm. In terms of biological role, participates actively in the response to hyperosmotic and heat shock by preventing the aggregation of stress-denatured proteins and by disaggregating proteins, also in an autonomous, DnaK-independent fashion. Unfolded proteins bind initially to DnaJ; upon interaction with the DnaJ-bound protein, DnaK hydrolyzes its bound ATP, resulting in the formation of a stable complex. GrpE releases ADP from DnaK; ATP binding to DnaK triggers the release of the substrate protein, thus completing the reaction cycle. Several rounds of ATP-dependent interactions between DnaJ, DnaK and GrpE are required for fully efficient folding. Also involved, together with DnaK and GrpE, in the DNA replication of plasmids through activation of initiation proteins. This chain is Chaperone protein DnaJ, found in Nitrosomonas europaea (strain ATCC 19718 / CIP 103999 / KCTC 2705 / NBRC 14298).